The following is a 1099-amino-acid chain: 1-phosphatidylinositol 4,5-bisphosphate phosphodiesterase 1 (1099 aa).

Over residues 1 to 10 (MLESLNRRNS) the composition is skewed to basic and acidic residues. Disordered regions lie at residues 1–109 (MLES…SSTT) and 128–164 (ESRS…KSIQ). Composition is skewed to low complexity over residues 43–66 (PPKS…KSDL) and 86–109 (PKQQ…SSTT). Polar residues predominate over residues 131–141 (SIVSNNGGSPM). Low complexity predominate over residues 142–155 (SDSTTVTSTLSTDT). The region spanning 566 to 726 (YDYPLNEYFI…LKHKFIIKVK (161 aa)) is the PI-PLC X-box domain. Active-site residues include histidine 579 and histidine 642. Lysine 724 and lysine 726 together coordinate substrate. Residues 742 to 780 (FTTSTTTTTTTTTTTTTATSLSEDNENNKSNSSSTSSFI) form a disordered region. Residues 743–778 (TTSTTTTTTTTTTTTTATSLSEDNENNKSNSSSTSS) show a composition bias toward low complexity. In terms of domain architecture, PI-PLC Y-box spans 794–912 (ELSNLGIYTQ…GYVLKPSVLR (119 aa)). 2 residues coordinate substrate: serine 823 and arginine 852. Positions 917 to 1071 (KSSSSNVDTR…QGYRYIYLND (155 aa)) constitute a C2 domain.

It catalyses the reaction a 1,2-diacyl-sn-glycero-3-phospho-(1D-myo-inositol-4,5-bisphosphate) + H2O = 1D-myo-inositol 1,4,5-trisphosphate + a 1,2-diacyl-sn-glycerol + H(+). The production of the second messenger molecules diacylglycerol (DAG) and inositol 1,4,5-trisphosphate (IP3) is mediated by activated phosphatidylinositol-specific phospholipase C enzymes. This is 1-phosphatidylinositol 4,5-bisphosphate phosphodiesterase 1 (PLC1) from Candida albicans (Yeast).